We begin with the raw amino-acid sequence, 689 residues long: Protein CFAP20DC (689 aa).

Disordered regions lie at residues 143-179 (GPPPLSGRRSNMRISSETVRSVGSKNNRSCQPSTVEK), 217-236 (LPIMHPHPPQEPSADKNNNR), 241-262 (LKSTSRERTETPSGNSSGNNTN), 333-424 (SKES…PSEL), and 583-660 (SIST…LSVE). The segment covering 150–176 (RRSNMRISSETVRSVGSKNNRSCQPST) has biased composition (polar residues). Residues 343–359 (EESQSVPKDIFTFSSRP) are compositionally biased toward polar residues. Over residues 394–405 (SEDDFYGGDSSE) the composition is skewed to acidic residues. Over residues 411–421 (IQGSRGPTTGP) the composition is skewed to polar residues. Positions 583 to 593 (SISTSSDDTTT) are enriched in low complexity.

The chain is Protein CFAP20DC (CFAP20DC) from Macaca fascicularis (Crab-eating macaque).